A 216-amino-acid chain; its full sequence is Probable GH family 25 lysozyme 5 (216 aa).

Residues 1–20 (MRFIISLLFVFTLIFNLAFS) form the signal peptide. In terms of domain architecture, Ch-type lysozyme spans 21–216 (HIGIDVSSGT…GLGIDKNYWE (196 aa)). Asp25 is an active-site residue. The N-linked (GlcNAc...) asparagine glycan is linked to Asn31. Residues Asp113 and Glu115 contribute to the active site.

This sequence belongs to the glycosyl hydrolase 25 family.

It localises to the secreted. It catalyses the reaction Hydrolysis of (1-&gt;4)-beta-linkages between N-acetylmuramic acid and N-acetyl-D-glucosamine residues in a peptidoglycan and between N-acetyl-D-glucosamine residues in chitodextrins.. The polypeptide is Probable GH family 25 lysozyme 5 (Dictyostelium discoideum (Social amoeba)).